The primary structure comprises 287 residues: Ret finger protein-like 4A (287 aa).

Residues 11–53 form an RING-type; degenerate zinc finger; sequence CYFCFRCLESPVYLNCGYICCLKCLDSLEKSPEGDGVLCPTCS. The region spanning 78 to 278 is the B30.2/SPRY domain; sequence EPQLNFILTM…LSICPVTNPG (201 aa).

As to quaternary structure, interacts with PSMB1, UBE2A and CCNB1. As to expression, expressed in the ovaries and oocytes (at protein level). Expression restricted to gonads. In testis, present at later stages of spermatogeneis and abundant in elongating spermatids.

The protein localises to the cytoplasm. The protein resides in the nucleus. This chain is Ret finger protein-like 4A (Rfpl4a), found in Mus musculus (Mouse).